We begin with the raw amino-acid sequence, 674 residues long: Transcription activator of gluconeogenesis PMAA_028970 (674 aa).

A disordered region spans residues 1–46 (MMDTDKDDLPSATDHSEHESGDAVKVEGGASKTASNSKDPSRPRRK). A compositionally biased stretch (basic and acidic residues) spans 14–25 (DHSEHESGDAVK). Residues 52 to 80 (CFACQRAHLTCGDERPCQRCIKRGLQDAC) constitute a DNA-binding region (zn(2)-C6 fungal-type). Disordered stretches follow at residues 117–181 (ISPT…ATPA), 250–321 (TGAG…SGLY), 344–374 (IGSN…SPMK), and 519–557 (NLNV…PGPN). A compositionally biased stretch (polar residues) spans 120 to 148 (TEYTQNGTNNAQQQQQKSGTIYASSTPSY). The segment covering 149 to 163 (NNNNGTFDTNNATNT) has biased composition (low complexity). 2 stretches are compositionally biased toward polar residues: residues 269 to 278 (GQRSNSQQFG) and 285 to 294 (TTESPSQQSF). Composition is skewed to low complexity over residues 348 to 366 (TFAS…IAPS) and 529 to 540 (NTSSQSDSTSSS).

It belongs to the ERT1/acuK family.

It localises to the nucleus. In terms of biological role, transcription factor which regulates nonfermentable carbon utilization. Activator of gluconeogenetic genes. The polypeptide is Transcription activator of gluconeogenesis PMAA_028970 (Talaromyces marneffei (strain ATCC 18224 / CBS 334.59 / QM 7333) (Penicillium marneffei)).